The primary structure comprises 362 residues: MKQPLISFKHVVKSYDDDVQVLKDVSFDIEEGKFYTLLGPSGCGKTTILNIIAGLSDATSGDVYFDGKRINDVPANKRQVNTVFQDYALFQHLNVYDNIAFGLKIKKVPADKIKEKVTEALRMVRLDGYEDRAISEMSGGQRQRVAIARAIVLDPKVLLLDEPLSALDQKLRAEMQYELRSLQKKLGITFIFITHDQEEALAMSDEIFVLNNGNIVQSGTPVDIYDEPINHYVADFIGESNIVNGIMIKDELVEFAGQQFPCVDGGMKPNEPVEVVIRPEDLVLTSPEKGQLKVKVDTQLFRGVHYEIRCTDALGNKWLVHSTKRAVPGENIGLSFGPEDIHVMRFNESEEDFDARLDSYND.

The ABC transporter domain occupies 6–237; it reads ISFKHVVKSY…PINHYVADFI (232 aa). Position 39 to 46 (39 to 46) interacts with ATP; that stretch reads GPSGCGKT.

The protein belongs to the ABC transporter superfamily. Spermidine/putrescine importer (TC 3.A.1.11.1) family. The complex is composed of two ATP-binding proteins (PotA), two transmembrane proteins (PotB and PotC) and a solute-binding protein (PotD).

The protein localises to the cell membrane. The enzyme catalyses ATP + H2O + polyamine-[polyamine-binding protein]Side 1 = ADP + phosphate + polyamineSide 2 + [polyamine-binding protein]Side 1.. Functionally, part of the ABC transporter complex PotABCD involved in spermidine/putrescine import. Responsible for energy coupling to the transport system. The protein is Spermidine/putrescine import ATP-binding protein PotA of Ligilactobacillus salivarius (strain UCC118) (Lactobacillus salivarius).